Here is a 98-residue protein sequence, read N- to C-terminus: MALTKAEMAENLFEKLGVSKRDAKDLVEAFFEEVRRSLENGEQVKLSGFGNFDLRDKNQRPGRNPKTGEDIPITARRVVTFRPGQKLKSRVENATPKE.

The disordered stretch occupies residues 50–71 (GNFDLRDKNQRPGRNPKTGEDI).

This sequence belongs to the bacterial histone-like protein family. Heterodimer of an alpha and a beta chain.

This protein is one of the two subunits of integration host factor, a specific DNA-binding protein that functions in genetic recombination as well as in transcriptional and translational control. The sequence is that of Integration host factor subunit alpha from Proteus mirabilis (strain HI4320).